The sequence spans 220 residues: Deoxyribose-phosphate aldolase 2 (220 aa).

Asp89 acts as the Proton donor/acceptor in catalysis. The Schiff-base intermediate with acetaldehyde role is filled by Lys151. Lys180 acts as the Proton donor/acceptor in catalysis.

Belongs to the DeoC/FbaB aldolase family. DeoC type 1 subfamily.

Its subcellular location is the cytoplasm. It carries out the reaction 2-deoxy-D-ribose 5-phosphate = D-glyceraldehyde 3-phosphate + acetaldehyde. Its pathway is carbohydrate degradation; 2-deoxy-D-ribose 1-phosphate degradation; D-glyceraldehyde 3-phosphate and acetaldehyde from 2-deoxy-alpha-D-ribose 1-phosphate: step 2/2. In terms of biological role, catalyzes a reversible aldol reaction between acetaldehyde and D-glyceraldehyde 3-phosphate to generate 2-deoxy-D-ribose 5-phosphate. The chain is Deoxyribose-phosphate aldolase 2 from Staphylococcus aureus (strain MSSA476).